The sequence spans 187 residues: UPF0301 protein SO_3346 (187 aa).

It belongs to the UPF0301 (AlgH) family.

The protein is UPF0301 protein SO_3346 of Shewanella oneidensis (strain ATCC 700550 / JCM 31522 / CIP 106686 / LMG 19005 / NCIMB 14063 / MR-1).